Reading from the N-terminus, the 296-residue chain is GTPase Era (296 aa).

In terms of domain architecture, Era-type G spans 3 to 170 (KSGFVTIIGR…IELMVKHLNE (168 aa)). Positions 11–18 (GRPNVGKS) are G1. 11-18 (GRPNVGKS) contacts GTP. The interval 37-41 (QTTRN) is G2. Positions 58 to 61 (DTPG) are G3. Residues 58-62 (DTPGM) and 120-123 (NKID) each bind GTP. The interval 120–123 (NKID) is G4. A G5 region spans residues 149 to 151 (ISA). The 77-residue stretch at 201-277 (LSQEVPHGIA…NMKIWVKVKK (77 aa)) folds into the KH type-2 domain.

This sequence belongs to the TRAFAC class TrmE-Era-EngA-EngB-Septin-like GTPase superfamily. Era GTPase family. Monomer.

Its subcellular location is the cytoplasm. It localises to the cell membrane. Its function is as follows. An essential GTPase that binds both GDP and GTP, with rapid nucleotide exchange. Plays a role in 16S rRNA processing and 30S ribosomal subunit biogenesis and possibly also in cell cycle regulation and energy metabolism. This Clostridium acetobutylicum (strain ATCC 824 / DSM 792 / JCM 1419 / IAM 19013 / LMG 5710 / NBRC 13948 / NRRL B-527 / VKM B-1787 / 2291 / W) protein is GTPase Era.